The sequence spans 65 residues: Photosystem II reaction center protein J (65 aa).

Over residues 1-18 (MSSKLKGPDGRLPDRLPD) the composition is skewed to basic and acidic residues. The tract at residues 1–21 (MSSKLKGPDGRLPDRLPDGRP) is disordered. Residues 36 to 56 (LWLVATAGGIAVIFVLGIFFY) form a helical membrane-spanning segment.

Belongs to the PsbJ family. In terms of assembly, PSII is composed of 1 copy each of membrane proteins PsbA, PsbB, PsbC, PsbD, PsbE, PsbF, PsbH, PsbI, PsbJ, PsbK, PsbL, PsbM, PsbT, PsbX, PsbY, Psb30/Ycf12, peripheral proteins PsbO, CyanoQ (PsbQ), PsbU, PsbV and a large number of cofactors. It forms dimeric complexes.

The protein resides in the cellular thylakoid membrane. Functionally, one of the components of the core complex of photosystem II (PSII). PSII is a light-driven water:plastoquinone oxidoreductase that uses light energy to abstract electrons from H(2)O, generating O(2) and a proton gradient subsequently used for ATP formation. It consists of a core antenna complex that captures photons, and an electron transfer chain that converts photonic excitation into a charge separation. The sequence is that of Photosystem II reaction center protein J from Prochlorococcus marinus (strain SARG / CCMP1375 / SS120).